Consider the following 84-residue polypeptide: Putative UPF0320 protein YNL337W (84 aa).

This sequence belongs to the UPF0320 family.

This is Putative UPF0320 protein YNL337W from Saccharomyces cerevisiae (strain ATCC 204508 / S288c) (Baker's yeast).